The sequence spans 144 residues: Protein MIX23 (144 aa).

Residue alanine 2 is modified to N-acetylalanine. Residues 82 to 120 (VKSLREEREKNLDDLTLLKRLRKEQTKLKWMQSELNVEE) adopt a coiled-coil conformation. Lysine 100 carries the N6-acetyllysine modification.

The protein belongs to the MIX23 family.

This chain is Protein MIX23, found in Mus musculus (Mouse).